The following is a 686-amino-acid chain: Ovotransferrin (686 aa).

Transferrin-like domains follow at residues 7 to 333 (VRWC…SLRK) and 345 to 670 (IQWC…SLNT). 6 disulfides stabilise this stretch: cysteine 10/cysteine 45, cysteine 20/cysteine 36, cysteine 115/cysteine 197, cysteine 160/cysteine 174, cysteine 171/cysteine 182, and cysteine 228/cysteine 242. The segment at 333 to 341 (KDQLTVGPR) is connecting region. Intrachain disulfides connect cysteine 348–cysteine 380, cysteine 358–cysteine 371, cysteine 405–cysteine 680, cysteine 421–cysteine 643, cysteine 454–cysteine 530, cysteine 478–cysteine 671, cysteine 488–cysteine 502, cysteine 499–cysteine 513, and cysteine 570–cysteine 584. Asparagine 473 is a glycosylation site (N-linked (GlcNAc...) asparagine). Asparagine 548 is a glycosylation site (N-linked (GlcNAc...) asparagine).

This sequence belongs to the transferrin family. Monomer.

Its subcellular location is the secreted. Transferrins are iron binding transport proteins which can bind two Fe(3+) ions in association with the binding of an anion, usually bicarbonate. It is responsible for the transport of iron from sites of absorption and heme degradation to those of storage and utilization. Serum transferrin may also have a further role in stimulating cell proliferation. In terms of biological role, ovotransferrin has a bacteriostatic function. Its concentration in avian egg is the highest concentration of any transferrin in vivo. The chain is Ovotransferrin from Anas platyrhynchos (Mallard).